An 84-amino-acid chain; its full sequence is MKTLLLILVVVTIVCLDLVCCSRTCCNQQSSQPKTTTVCPDGEKSCYKKSWRDHRGTRSERGCGCPTVKPGVNRECCDTDECNN.

The N-terminal stretch at 1–21 (MKTLLLILVVVTIVCLDLVCC) is a signal peptide. 4 cysteine pairs are disulfide-bonded: Cys25–Cys46, Cys39–Cys63, Cys65–Cys76, and Cys77–Cys82.

The protein belongs to the three-finger toxin family. Short-chain subfamily. Type I alpha-neurotoxin sub-subfamily. As to expression, expressed by the venom gland.

The protein localises to the secreted. In terms of biological role, binds to muscle nicotinic acetylcholine receptor (nAChR) and inhibit acetylcholine from binding to the receptor, thereby impairing neuromuscular transmission. The polypeptide is Short neurotoxin SNTX-1 (Demansia vestigiata (Lesser black whip snake)).